The sequence spans 800 residues: Metabotropic glutamate receptor-like protein C (800 aa).

The signal sequence occupies residues 1 to 21 (MKMKIIFLILILIFSINIIKC). Topologically, residues 22-392 (DKEFKMLTLL…EVEFSQSLQY (371 aa)) are extracellular. Asn69, Asn107, Asn166, Asn258, Asn276, Asn302, and Asn345 each carry an N-linked (GlcNAc...) asparagine glycan. The chain crosses the membrane as a helical span at residues 393–413 (GFSITTGVLIAITIIMMLGIV). Over 414–426 (RYKSTPSIRSASP) the chain is Cytoplasmic. A helical membrane pass occupies residues 427–447 (IFLNFILAGGIIVYIGIIVWV). Topologically, residues 448–463 (GPANDHQCNARLWLVT) are extracellular. Residues 464-484 (LGFSTLIGSLVVKNFRIWLIF) form a helical membrane-spanning segment. The Cytoplasmic portion of the chain corresponds to 485–499 (DNPELKSISITNYQL). The chain crosses the membrane as a helical span at residues 500-520 (FPWVGACLVINIILMSILTSV). Over 521-551 (GDLREIDAQGIDSLGKYEFMKVCKMNSSGAS) the chain is Extracellular. A glycan (N-linked (GlcNAc...) asparagine) is linked at Asn546. The helical transmembrane segment at 552-572 (TLYTILAYFAALLLVGVFVSW) threads the bilayer. The Cytoplasmic segment spans residues 573-586 (KIRIVDIQEFNESK). Residues 587–607 (AIANTLYAISFCLFVIVPLMI) form a helical membrane-spanning segment. At 608–616 (SPQDKQSET) the chain is on the extracellular side. A helical membrane pass occupies residues 617–637 (IVLCTAGLFITTAALLIIFTP). Residues 638–800 (KFWRVFTLGD…NDTEEEDKNQ (163 aa)) lie on the Cytoplasmic side of the membrane. Disordered regions lie at residues 658–694 (QSNV…TETS) and 718–800 (EFDD…DKNQ). The span at 718 to 732 (EFDDNNIEQDNDNDN) shows a compositional bias: acidic residues. Residues 733-774 (DNNNNNNNNNNNNNNNNNNNNNNNNNNNNNNNNNNNNNNNNN) show a composition bias toward low complexity. Basic and acidic residues predominate over residues 781-791 (NDEKVEEKQQN).

It in the N-terminal section; belongs to the BMP lipoprotein family. This sequence in the C-terminal section; belongs to the G-protein coupled receptor 3 family. GABA-B receptor subfamily.

It is found in the membrane. This is Metabotropic glutamate receptor-like protein C (grlC) from Dictyostelium discoideum (Social amoeba).